A 126-amino-acid chain; its full sequence is Acyl carrier protein 2, mitochondrial (126 aa).

The transit peptide at 1-36 (MAARGAMLRYLRVNVNPTIQNPRECVLPFSILLRRF) directs the protein to the mitochondrion. In terms of domain architecture, Carrier spans 48 to 123 (SEVTDRVLSV…LAVDFIASHP (76 aa)). Serine 83 is subject to O-(pantetheine 4'-phosphoryl)serine.

Belongs to the acyl carrier protein (ACP) family. In terms of assembly, complex I is composed of at least 49 different subunits. In terms of processing, 4'-phosphopantetheine is transferred from CoA to a specific serine of the apo-ACP-like protein.

Its subcellular location is the mitochondrion. Its pathway is lipid metabolism; fatty acid biosynthesis. Its function is as follows. Carrier of the growing fatty acid chain in fatty acid biosynthesis. May be involved in the synthesis of short and medium chain fatty acids. Accessory and non-catalytic subunit of the mitochondrial membrane respiratory chain NADH dehydrogenase (Complex I), which functions in the transfer of electrons from NADH to the respiratory chain. The sequence is that of Acyl carrier protein 2, mitochondrial (MTACP2) from Arabidopsis thaliana (Mouse-ear cress).